Consider the following 281-residue polypeptide: Sulfur carrier protein FdhD (281 aa).

The active-site Cysteine persulfide intermediate is the Cys117.

The protein belongs to the FdhD family.

It localises to the cytoplasm. In terms of biological role, required for formate dehydrogenase (FDH) activity. Acts as a sulfur carrier protein that transfers sulfur from IscS to the molybdenum cofactor prior to its insertion into FDH. This is Sulfur carrier protein FdhD from Xanthomonas campestris pv. campestris (strain 8004).